Here is a 367-residue protein sequence, read N- to C-terminus: MTSSAPLILLAAGGTGGHLFPAEALGVELIKRGYRVRLVTDARALRYSGLFTKDMIDVVPSETVRSRSPVALARTALLLGTGTLAAFNLMRRLKPAAVIGFGGYPTVPPLLAARLAGVPSLIHDANAVLGRANRFLSAHVKAIATSLPGVLDRDPALSGKTTTVGTPMRPAILEAAAVPYAAPETAGPLRLLVVGGSQGARVMSDVVPGAIERLEPALWSRLVLTQQVRQEDMARVRAVYDRLKINAELQPFFTDLPARLAANHLVISRSGAGTVAELAAIGRPSILVPLPGAIDQDQYANAGVLSDANAAIRIVQSDFTSDRLASEISALAAEPVRLAAMAQAARAAGRLDAAERLADLVIKTAGL.

Residues 15-17 (TGG), Asn126, Arg169, Ser197, and Gln298 contribute to the UDP-N-acetyl-alpha-D-glucosamine site.

It belongs to the glycosyltransferase 28 family. MurG subfamily.

Its subcellular location is the cell inner membrane. It catalyses the reaction di-trans,octa-cis-undecaprenyl diphospho-N-acetyl-alpha-D-muramoyl-L-alanyl-D-glutamyl-meso-2,6-diaminopimeloyl-D-alanyl-D-alanine + UDP-N-acetyl-alpha-D-glucosamine = di-trans,octa-cis-undecaprenyl diphospho-[N-acetyl-alpha-D-glucosaminyl-(1-&gt;4)]-N-acetyl-alpha-D-muramoyl-L-alanyl-D-glutamyl-meso-2,6-diaminopimeloyl-D-alanyl-D-alanine + UDP + H(+). Its pathway is cell wall biogenesis; peptidoglycan biosynthesis. Cell wall formation. Catalyzes the transfer of a GlcNAc subunit on undecaprenyl-pyrophosphoryl-MurNAc-pentapeptide (lipid intermediate I) to form undecaprenyl-pyrophosphoryl-MurNAc-(pentapeptide)GlcNAc (lipid intermediate II). The chain is UDP-N-acetylglucosamine--N-acetylmuramyl-(pentapeptide) pyrophosphoryl-undecaprenol N-acetylglucosamine transferase from Bradyrhizobium sp. (strain BTAi1 / ATCC BAA-1182).